Consider the following 397-residue polypeptide: MTTNTVSRKVAWLRVVTLAIAAFIFNTTEFVPVGLLSDIARSFAMPTAQVGIMLTIYAWVVALMSLPFMLLTSQVERRKLLICLFVLFIASHVLSFLAWNFTVLVISRIGIAFAHAVFWSITASLAIRLAPPGKRAQALSLIATGTALAMVLGLPIGRIVGQYFGWRTTFFAIGIGALITLVCLIKLLPKLPSEHSGSLKSLPLLFRRPALMSIYLLTVVVVTAHYTAYSYIEPFVQTVAGLSANFATVLLLILGGAGIIGSVVFGKLGNQYASPLISIAIMLLVICLMLLLPAADSESHLAVLSIFWGIAIMVIGLGMQVKVLALAPDATDVAMALFSGIFNIGIGAGALVGNQVSLHWSMSTIGYVGAVPALAALVWSIIIFRRWPVSLEEQPQH.

12 consecutive transmembrane segments (helical) span residues 15–35, 50–70, 81–101, 103–123, 136–156, 169–189, 209–229, 246–266, 275–295, 301–321, 333–353, and 364–384; these read VVTLAIAAFIFNTTEFVPVGL, VGIMLTIYAWVVALMSLPFML, LICLFVLFIASHVLSFLAWNF, VLVISRIGIAFAHAVFWSITA, AQALSLIATGTALAMVLGLPI, TFFAIGIGALITLVCLIKLLP, PALMSIYLLTVVVVTAHYTAY, FATVLLLILGGAGIIGSVVFG, PLISIAIMLLVICLMLLLPAA, LAVLSIFWGIAIMVIGLGMQV, VAMALFSGIFNIGIGAGALVG, and TIGYVGAVPALAALVWSIIIF.

It belongs to the major facilitator superfamily. SotB (TC 2.A.1.2) family.

It is found in the cell inner membrane. Its function is as follows. Involved in the efflux of sugars. The physiological role may be the reduction of the intracellular concentration of toxic sugars or sugar metabolites. In Citrobacter koseri (strain ATCC BAA-895 / CDC 4225-83 / SGSC4696), this protein is Probable sugar efflux transporter.